A 154-amino-acid polypeptide reads, in one-letter code: Large ribosomal subunit protein uL23 (154 aa).

The tract at residues M1 to R39 is disordered. The segment covering K15–K26 has biased composition (low complexity).

Belongs to the universal ribosomal protein uL23 family.

Its function is as follows. This protein binds to a specific region on the 26S rRNA. The sequence is that of Large ribosomal subunit protein uL23 (RPL23A) from Nicotiana tabacum (Common tobacco).